Here is a 211-residue protein sequence, read N- to C-terminus: Protein GrpE (211 aa).

The segment covering 1–13 has biased composition (basic and acidic residues); it reads MVDKDEEQIKQNV. The interval 1 to 38 is disordered; the sequence is MVDKDEEQIKQNVEEDLSSTVEQTGEENIEFPSAPNHP.

It belongs to the GrpE family. Homodimer.

It localises to the cytoplasm. Participates actively in the response to hyperosmotic and heat shock by preventing the aggregation of stress-denatured proteins, in association with DnaK and GrpE. It is the nucleotide exchange factor for DnaK and may function as a thermosensor. Unfolded proteins bind initially to DnaJ; upon interaction with the DnaJ-bound protein, DnaK hydrolyzes its bound ATP, resulting in the formation of a stable complex. GrpE releases ADP from DnaK; ATP binding to DnaK triggers the release of the substrate protein, thus completing the reaction cycle. Several rounds of ATP-dependent interactions between DnaJ, DnaK and GrpE are required for fully efficient folding. The polypeptide is Protein GrpE (Protochlamydia amoebophila (strain UWE25)).